Here is a 382-residue protein sequence, read N- to C-terminus: Chorismate synthase (382 aa).

2 residues coordinate NADP(+): Arg39 and Arg45. Residues 127 to 129 (RAS), 245 to 246 (QA), Gly290, 305 to 309 (KPIPT), and Arg331 contribute to the FMN site.

It belongs to the chorismate synthase family. Homotetramer. FMNH2 is required as a cofactor.

The catalysed reaction is 5-O-(1-carboxyvinyl)-3-phosphoshikimate = chorismate + phosphate. Its pathway is metabolic intermediate biosynthesis; chorismate biosynthesis; chorismate from D-erythrose 4-phosphate and phosphoenolpyruvate: step 7/7. Functionally, catalyzes the anti-1,4-elimination of the C-3 phosphate and the C-6 proR hydrogen from 5-enolpyruvylshikimate-3-phosphate (EPSP) to yield chorismate, which is the branch point compound that serves as the starting substrate for the three terminal pathways of aromatic amino acid biosynthesis. This reaction introduces a second double bond into the aromatic ring system. The sequence is that of Chorismate synthase from Desulfitobacterium hafniense (strain DSM 10664 / DCB-2).